The sequence spans 205 residues: Holliday junction branch migration complex subunit RuvA (205 aa).

Positions 1–64 (MIGKLKGTID…EDQLKLFGFM (64 aa)) are domain I. The domain II stretch occupies residues 65–143 (SALEREWFNL…AFTGDAGSAI (79 aa)). The tract at residues 144–153 (GLKQELGEGV) is flexible linker. Positions 153 to 205 (VASAPVSDAVSALTNLGYSRDQAANAIAAALKNGGEGADSAKLIRLGLKELSR) are domain III.

It belongs to the RuvA family. In terms of assembly, homotetramer. Forms an RuvA(8)-RuvB(12)-Holliday junction (HJ) complex. HJ DNA is sandwiched between 2 RuvA tetramers; dsDNA enters through RuvA and exits via RuvB. An RuvB hexamer assembles on each DNA strand where it exits the tetramer. Each RuvB hexamer is contacted by two RuvA subunits (via domain III) on 2 adjacent RuvB subunits; this complex drives branch migration. In the full resolvosome a probable DNA-RuvA(4)-RuvB(12)-RuvC(2) complex forms which resolves the HJ.

The protein localises to the cytoplasm. Functionally, the RuvA-RuvB-RuvC complex processes Holliday junction (HJ) DNA during genetic recombination and DNA repair, while the RuvA-RuvB complex plays an important role in the rescue of blocked DNA replication forks via replication fork reversal (RFR). RuvA specifically binds to HJ cruciform DNA, conferring on it an open structure. The RuvB hexamer acts as an ATP-dependent pump, pulling dsDNA into and through the RuvAB complex. HJ branch migration allows RuvC to scan DNA until it finds its consensus sequence, where it cleaves and resolves the cruciform DNA. The chain is Holliday junction branch migration complex subunit RuvA from Allorhizobium ampelinum (strain ATCC BAA-846 / DSM 112012 / S4) (Agrobacterium vitis (strain S4)).